Reading from the N-terminus, the 95-residue chain is Aspartyl/glutamyl-tRNA(Asn/Gln) amidotransferase subunit C (95 aa).

It belongs to the GatC family. In terms of assembly, heterotrimer of A, B and C subunits.

The catalysed reaction is L-glutamyl-tRNA(Gln) + L-glutamine + ATP + H2O = L-glutaminyl-tRNA(Gln) + L-glutamate + ADP + phosphate + H(+). It catalyses the reaction L-aspartyl-tRNA(Asn) + L-glutamine + ATP + H2O = L-asparaginyl-tRNA(Asn) + L-glutamate + ADP + phosphate + 2 H(+). Functionally, allows the formation of correctly charged Asn-tRNA(Asn) or Gln-tRNA(Gln) through the transamidation of misacylated Asp-tRNA(Asn) or Glu-tRNA(Gln) in organisms which lack either or both of asparaginyl-tRNA or glutaminyl-tRNA synthetases. The reaction takes place in the presence of glutamine and ATP through an activated phospho-Asp-tRNA(Asn) or phospho-Glu-tRNA(Gln). The sequence is that of Aspartyl/glutamyl-tRNA(Asn/Gln) amidotransferase subunit C from Maricaulis maris (strain MCS10) (Caulobacter maris).